The following is a 1693-amino-acid chain: Non-structural polyprotein pORF1 (1693 aa).

In terms of domain architecture, Alphavirus-like MT spans 56–240; it reads VFRPEVFWNH…HDVSNLRSWI (185 aa). Residues 60–240 form a methyltransferase region; it reads EVFWNHPIQR…HDVSNLRSWI (181 aa). Positions 241–439 are Y-domain; it reads RTTKVTGDHP…FYAQCRRWLS (199 aa). A disulfide bridge connects residues cysteine 434 and cysteine 481. The putative protease stretch occupies residues 442-509; the sequence is FHLDPRVLVF…EAYEGSDVDP (68 aa). Residues 510 to 691 form a zinc-binding region; sequence AESAISDISG…FSPGHVWESA (182 aa). Histidine 671, glutamate 673, and histidine 686 together coordinate Zn(2+). The tract at residues 712 to 778 is hinge; sequence SSPARPDLGL…AITHQTARHR (67 aa). A disordered region spans residues 737–769; it reads AVLLPPPAPDPPPPPSAPALDEPASGATAGAPA. The segment covering 740 to 753 has biased composition (pro residues); sequence LPPPAPDPPPPPSA. The Macro domain maps to 775-921; that stretch reads ARHRRLLFTY…LYLPELAARW (147 aa). The tract at residues 785–942 is X-domain; the sequence is PDGSKVFAGS…TITEDVARTA (158 aa). In terms of domain architecture, (+)RNA virus helicase ATP-binding spans 934–1082; that stretch reads ITEDVARTAN…RPDLGPTSWW (149 aa). The segment at 960–1204 is NTPase/helicase; that stretch reads GCRVTPGVVQ…ISDAIVNNFF (245 aa). Residue 975 to 982 participates in ATP binding; sequence GVPGSGKS. In terms of domain architecture, (+)RNA virus helicase C-terminal spans 1083–1216; it reads HVTHRCPADV…GGEIGHQRPS (134 aa). An RNA-directed RNA polymerase region spans residues 1207 to 1693; sequence GGEIGHQRPS…LTNSILCRVE (487 aa). One can recognise a RdRp catalytic domain in the interval 1454–1565; it reads SMVFENDFSE…LCSEYRQSPG (112 aa).

This sequence belongs to the hepevirus non-structural polyprotein family. The protease domain interacts with host EIF2AK4 (via C-terminus); this interaction inhibits dimerization of EIF2AK4 and prevents EIF2AK4-mediated phosphorylation of host EIF2A. Requires Mg(2+) as cofactor. In terms of processing, ORF1 polyprotein does not seem to be processed into distinct enzymatic domains by a viral protease belonging to ORF1, but could be processed by a host serine protease like thrombin.

The protein resides in the host cytoplasm. It is found in the host perinuclear region. It catalyses the reaction RNA(n) + a ribonucleoside 5'-triphosphate = RNA(n+1) + diphosphate. The enzyme catalyses GTP + S-adenosyl-L-methionine = N(7)-methyl-GTP + S-adenosyl-L-homocysteine. With respect to regulation, putative protease: Inhibited by chymostatin. Functionally, methyltransferase: Displays a capping enzyme activity. This function is necessary since all viral RNAs are synthesized in the cytoplasm, and host capping enzymes are restricted to the nucleus. The enzymatic reaction involves a covalent link between 7-methyl-GMP and the methyltransferase, whereas eukaryotic capping enzymes form a covalent complex only with GMP. Methyltransferase catalyzes transfer of a methyl group from S-adenosylmethionine to GTP and GDP to yield m(7)GTP or m(7)GDP. GDP is a better substrate than GTP. This enzyme also displays guanylyltransferase activity to form a covalent complex, methyltransferase-m(7)GMP, from which 7-methyl-GMP is transferred to the mRNA to create the cap structure. Y-domain: Indispensable for virus replication. In terms of biological role, putative protease: The putative protease domain although necessary for replication of the virus may not be a protease but rather a structural Zn(2+)-binding domain. Inhibits induction of IFN-beta by MDA5 and RIG-I pathways and down-regulates the expression of MDA5. Its function is as follows. NTPase/helicase: Multi-functional protein that exhibits NTPase and RNA unwinding activities. Hydrolyzes all NTPs efficiently and unwinds RNA duplexes containing 5' overhangs. Possesses a sequence independent RNA-5'-triphosphatase (RTPase) activity suggestive of its role in forming viral cap structure. Also participates in viral genome replication, RNA translocation and genome packaging/unpackaging. Functionally, RNA-directed RNA polymerase: Plays an essential role in the virus replication. Binds to the 3'-end of the genomic RNA to initiate viral replication. The polypeptide is Non-structural polyprotein pORF1 (Hepatitis E virus genotype 1 (isolate Human/Myanmar/HEVNE8L) (HEV-1)).